The primary structure comprises 413 residues: Clusterin-associated protein 1 (413 aa).

Residues 185–308 (MRIAIKDLLA…KEEEKRLLKS (124 aa)) adopt a coiled-coil conformation. Residues 303–413 (KRLLKSGSND…EPLDESDNDF (111 aa)) are disordered. 2 stretches are compositionally biased toward acidic residues: residues 312–328 (DDSDIDIQEDDESDSEL) and 360–388 (DSDEDEDSEDSEIDMEDDEEDDDDLEDES). Phosphoserine occurs at positions 314, 324, and 326. Ser409 bears the Phosphoserine mark.

The protein belongs to the CLUAP1 family. Interacts with CLU/clusterin. Interacts with UBXN10; the interaction is direct. As to expression, expressed in all tissues tested including heart, kidney, skeletal muscle, eye, liver, ovary, oviduct, testes, lung and brain. Elevated levels in multiciliated cells such as the bronchioles of the lungs, ependymal cells of the brain and cells with a single primary cilia of heart and kidney.

Its subcellular location is the cell projection. The protein resides in the cilium. It is found in the nucleus. In terms of biological role, required for cilia biogenesis. Appears to function within the multiple intraflagellar transport complex B (IFT-B). Key regulator of hedgehog signaling. In Mus musculus (Mouse), this protein is Clusterin-associated protein 1 (Cluap1).